An 864-amino-acid chain; its full sequence is DNA mismatch repair protein MutS (864 aa).

An ATP-binding site is contributed by 607 to 614 (GPNMGGKS).

It belongs to the DNA mismatch repair MutS family.

In terms of biological role, this protein is involved in the repair of mismatches in DNA. It is possible that it carries out the mismatch recognition step. This protein has a weak ATPase activity. This chain is DNA mismatch repair protein MutS, found in Neisseria meningitidis serogroup C (strain 053442).